The following is a 1108-amino-acid chain: Activity-dependent neuroprotector homeobox protein (1108 aa).

Residues 1 to 685 (MFQLPVNNLG…ASTITLHLVH (685 aa)) are binds to beta-catenin/CTNNB1. Residues lysine 39 and lysine 72 each participate in a glycyl lysine isopeptide (Lys-Gly) (interchain with G-Cter in SUMO2) cross-link. The C2H2-type 1; degenerate zinc-finger motif lies at 74–97 (FCCSACPFSSKFFSAYKSHFRNVH). Position 98 is a phosphoserine (serine 98). The C2H2-type 2; degenerate zinc-finger motif lies at 107 to 129 (LNCPYCTFNADKKTLETHIKIFH). The segment at 133–154 (SSAPSSSLSTFKDKNKNDGLKP) is disordered. A compositionally biased stretch (basic and acidic residues) spans 143–154 (FKDKNKNDGLKP). Glycyl lysine isopeptide (Lys-Gly) (interchain with G-Cter in SUMO2) cross-links involve residues lysine 144 and lysine 155. The C2H2-type 3; degenerate zinc-finger motif lies at 165–188 (YYCKKCTYRDPLYEIVRKHIYREH). Glycyl lysine isopeptide (Lys-Gly) (interchain with G-Cter in SUMO2) cross-links involve residues lysine 203, lysine 231, lysine 266, lysine 274, lysine 278, lysine 279, lysine 311, and lysine 335. The C2H2-type 4; degenerate zinc finger occupies 221–244 (IHCKRCLFMPKSYEALVQHVIEDH). An Asymmetric dimethylarginine modification is found at arginine 348. Residues 354 to 361 (NAPVSIPQ) form a neuroprotective peptide; contributes to CTNNB1-binding, but less effective than whole N-terminal region region. A disordered region spans residues 360–438 (PQQSQSVKQL…PAATGPPPSN (79 aa)). Glycyl lysine isopeptide (Lys-Gly) (interchain with G-Cter in SUMO2) cross-links involve residues lysine 367 and lysine 407. The segment covering 393 to 422 (SLQTANTSLPPGQVKSPSVSQSQASRVLGQ) has biased composition (polar residues). Phosphoserine occurs at positions 408 and 412. Lysine 426 participates in a covalent cross-link: Glycyl lysine isopeptide (Lys-Gly) (interchain with G-Cter in SUMO2). A compositionally biased stretch (pro residues) spans 426 to 437 (KPPPAATGPPPS). The C2H2-type 5; atypical zinc finger occupies 446–468 (KICTICNELFPENVYSVHFEKEH). 2 C2H2-type zinc fingers span residues 488–509 (SKCLYCNRYLPTDTLLNHMLIH) and 511–534 (LSCPYCRSTFNDVEKMAAHMRMVH). Residues lysine 599 and lysine 605 each participate in a glycyl lysine isopeptide (Lys-Gly) (interchain with G-Cter in SUMO2) cross-link. Serine 607 is subject to Phosphoserine. Glycyl lysine isopeptide (Lys-Gly) (interchain with G-Cter in SUMO2) cross-links involve residues lysine 615, lysine 620, lysine 631, and lysine 657. The segment at 621-646 (TLCPLCFSILKGPISDALAHHLRERH) adopts a C2H2-type 8; atypical zinc-finger fold. Residues 661–685 (YKCIHCLGVYTSNMTASTITLHLVH) form a C2H2-type 9; atypical zinc finger. The interval 690-711 (GKTQNGQDKTNAPSRLNQSPGL) is disordered. Over residues 691–709 (KTQNGQDKTNAPSRLNQSP) the composition is skewed to polar residues. Lysine 698 participates in a covalent cross-link: Glycyl lysine isopeptide (Lys-Gly) (interchain with G-Cter in SUMO2). Residue serine 708 is modified to Phosphoserine. Glycyl lysine isopeptide (Lys-Gly) (interchain with G-Cter in SUMO2) cross-links involve residues lysine 715, lysine 727, and lysine 730. At serine 737 the chain carries Phosphoserine. A Glycyl lysine isopeptide (Lys-Gly) (interchain with G-Cter in SUMO2) cross-link involves residue lysine 744. The homeobox DNA-binding region spans 753-813 (LDPKGHEDDS…SNKRKKCVRD (61 aa)). Serine 804 is modified (phosphoserine). Residues lysine 806, lysine 828, and lysine 834 each participate in a glycyl lysine isopeptide (Lys-Gly) (interchain with G-Cter in SUMO2) cross-link. Residues 851-880 (KDSRVNASKTVDKKHNLGKEDDSFSDSFEH) show a composition bias toward basic and acidic residues. The tract at residues 851–1037 (KDSRVNASKT…DTEQLKWKNS (187 aa)) is disordered. Phosphoserine occurs at positions 875, 877, 885, 888, and 904. Residues lysine 913, lysine 928, and lysine 941 each participate in a glycyl lysine isopeptide (Lys-Gly) (interchain with G-Cter in SUMO2) cross-link. Over residues 928–938 (KEEEEEEEEED) the composition is skewed to acidic residues. Basic and acidic residues predominate over residues 939–959 (GSKYETIHLTEEPAKLMHDAS). Phosphoserine occurs at positions 959 and 961. Over residues 977–988 (PSESGPGSQQIS) the composition is skewed to polar residues. Lysine 1022 participates in a covalent cross-link: Glycyl lysine isopeptide (Lys-Gly) (interchain with G-Cter in SUMO2). 2 positions are modified to N6-acetyllysine; alternate: lysine 1041 and lysine 1048. Residues lysine 1041 and lysine 1048 each participate in a glycyl lysine isopeptide (Lys-Gly) (interchain with G-Cter in SUMO2); alternate cross-link. Residues 1050–1108 (QSQWENASENAERLPNPQIEWQNSTIDSEDGEQFDSMTDGVADPMHGSLTGVKLSSQQA) are disordered. A Phosphoserine modification is found at serine 1077.

Interacts (via N-terminal region) with beta-catenin/CTNNB1 (via the central armadillo domains); interaction is direct and stabilizes CTNNB1 by modulating its phosphorylation by glycogen synthase kinase-3 beta GSK3B. Expressed in the brain, with a higher expression in cerebellum and hippocampus. Weakly expressed in lung, kidney and intestine, and expressed at intermediate level in testis.

The protein resides in the nucleus. It localises to the chromosome. In terms of biological role, may be involved in transcriptional regulation. May mediate some of the neuroprotective peptide VIP-associated effects involving normal growth and cancer proliferation. Positively modulates WNT-beta-catenin/CTNN1B signaling, acting by regulating phosphorylation of, and thereby stabilizing, CTNNB1. May be required for neural induction and neuronal differentiation. May be involved in erythroid differentiation. In Mus musculus (Mouse), this protein is Activity-dependent neuroprotector homeobox protein (Adnp).